A 947-amino-acid chain; its full sequence is Pyruvate, phosphate dikinase 1, chloroplastic (947 aa).

The transit peptide at 1–62 (MAASVSRAIC…GRGQHCSPLR (62 aa)) directs the protein to the chloroplast. The tract at residues 21 to 54 (DREATSFARRSVAAPRPPHAKAAGVIRSDSGAGR) is disordered. A63 is subject to N-acetylalanine; partial. T309 carries the phosphothreonine modification. S506 bears the Phosphoserine mark. At T527 the chain carries Phosphothreonine; by PDRP1. S528 is subject to Phosphoserine; by PDRP1. The active-site Tele-phosphohistidine intermediate is the H529. Residues R635, R692, E821, G842, T843, N844, and D845 each contribute to the substrate site. E821 is a Mg(2+) binding site. Residue D845 coordinates Mg(2+). Catalysis depends on C907, which acts as the Proton donor.

It belongs to the PEP-utilizing enzyme family. In terms of assembly, homotetramer. Requires Mg(2+) as cofactor. Post-translationally, phosphorylation of Thr-527 in the dark inactivates the enzyme, dephosphorylation upon light stimulation reactivates the enzyme. More highly phosphorylated when grown under high rather than low light regimes (70 vs 900 umol photons/m-2/s). the degree of phosphorylation is strictly regulated by light intensity and the light/dark transition has no influence. Phosphorylated in both mesophyll and bundle sheath cells. The phosphorylation at Ser-528 may be important for the phosphorylation at Thr-527 and may also be regulated by light intensity. Isoform C4PPDKZM1 mainly localized in mesophyll cells and only a low level is found in bundle sheath cells. Isoform CYPPDKZM1 expressed in roots, stems and etiolated leaves.

Its subcellular location is the plastid. The protein resides in the chloroplast. The protein localises to the cytoplasm. It catalyses the reaction pyruvate + phosphate + ATP = phosphoenolpyruvate + AMP + diphosphate + H(+). The protein operates within photosynthesis; C4 acid pathway. With respect to regulation, activated by light-induced dephosphorylation. Inhibited by dark-induced phosphorylation. Both reactions are catalyzed by PDRP1. Inactivated by cold due to the dissociation of the homotetramer. Independent of circadian regulation. Functionally, formation of phosphoenolpyruvate, which is the primary acceptor of CO(2) in C4 and some Crassulacean acid metabolism plants. This chain is Pyruvate, phosphate dikinase 1, chloroplastic, found in Zea mays (Maize).